Reading from the N-terminus, the 413-residue chain is SWIRM domain-containing protein FUN19 (413 aa).

Residues 35–51 (KASNNNNDSNKNGLNMS) are compositionally biased toward low complexity. 3 disordered regions span residues 35–55 (KASN…DYSN), 189–211 (YNDD…PLAS), and 249–271 (YSPQ…PSAS). Position 194 is a phosphothreonine (Thr-194). The span at 200–211 (SSSSRLPSPLAS) shows a compositional bias: low complexity. Phosphoserine is present on residues Ser-207 and Ser-211. Residues 316-413 (LKIEWKGSPM…LQDSNFTKYL (98 aa)) enclose the SWIRM domain.

This chain is SWIRM domain-containing protein FUN19 (FUN19), found in Saccharomyces cerevisiae (strain ATCC 204508 / S288c) (Baker's yeast).